Here is a 77-residue protein sequence, read N- to C-terminus: ATP synthase subunit c (77 aa).

The next 2 helical transmembrane spans lie at 13–33 and 55–75; these read IATV…GIVA and FLGI…YFIF.

It belongs to the ATPase C chain family. F-type ATPases have 2 components, F(1) - the catalytic core - and F(0) - the membrane proton channel. F(1) has five subunits: alpha(3), beta(3), gamma(1), delta(1), epsilon(1). F(0) has three main subunits: a(1), b(2) and c(10-14). The alpha and beta chains form an alternating ring which encloses part of the gamma chain. F(1) is attached to F(0) by a central stalk formed by the gamma and epsilon chains, while a peripheral stalk is formed by the delta and b chains.

It is found in the cell membrane. In terms of biological role, f(1)F(0) ATP synthase produces ATP from ADP in the presence of a proton or sodium gradient. F-type ATPases consist of two structural domains, F(1) containing the extramembraneous catalytic core and F(0) containing the membrane proton channel, linked together by a central stalk and a peripheral stalk. During catalysis, ATP synthesis in the catalytic domain of F(1) is coupled via a rotary mechanism of the central stalk subunits to proton translocation. Key component of the F(0) channel; it plays a direct role in translocation across the membrane. A homomeric c-ring of between 10-14 subunits forms the central stalk rotor element with the F(1) delta and epsilon subunits. The sequence is that of ATP synthase subunit c from Clavibacter sepedonicus (Clavibacter michiganensis subsp. sepedonicus).